The primary structure comprises 204 residues: Urease accessory protein UreG (204 aa).

G12–T19 contacts GTP.

The protein belongs to the SIMIBI class G3E GTPase family. UreG subfamily. Homodimer. UreD, UreF and UreG form a complex that acts as a GTP-hydrolysis-dependent molecular chaperone, activating the urease apoprotein by helping to assemble the nickel containing metallocenter of UreC. The UreE protein probably delivers the nickel.

The protein localises to the cytoplasm. In terms of biological role, facilitates the functional incorporation of the urease nickel metallocenter. This process requires GTP hydrolysis, probably effectuated by UreG. The chain is Urease accessory protein UreG from Pseudomonas fluorescens (strain ATCC BAA-477 / NRRL B-23932 / Pf-5).